An 815-amino-acid polypeptide reads, in one-letter code: Bifunctional aspartokinase/homoserine dehydrogenase (815 aa).

Residues 1–249 (MRVLKFGGTS…VPDARLLPTL (249 aa)) are aspartokinase. Positions 250-470 (SYREAMELSY…NNKKVVDMFL (221 aa)) are interface. ACT domains follow at residues 320-392 (VSGP…PIEV) and 401-478 (VVGD…GVGG). A homoserine dehydrogenase region spans residues 471 to 815 (VGVGGVGGEL…FADILRTLQH (345 aa)). NAD(+)-binding residues include Val473, Gly475, Val476, Ala504, and Thr555. Residue Val476 coordinates NADP(+). NADPH is bound at residue Val476. Residue Thr555 coordinates NADP(+). 3 residues coordinate NADPH: Thr555, Ser556, and Lys579. Lys579 is a binding site for NADP(+). Na(+) is bound by residues Glu606, Val609, Ala611, and Leu613. Positions 664 and 667 each coordinate NADP(+). Residues Glu667 and Asp678 each contribute to the L-homoserine site. Lys682 functions as the Proton donor in the catalytic mechanism. Gly797 contacts NAD(+). Gly797 provides a ligand contact to NADP(+). Residue Gly797 participates in NADPH binding.

In the N-terminal section; belongs to the aspartokinase family. It in the C-terminal section; belongs to the homoserine dehydrogenase family. Homotetramer. Requires a metal cation as cofactor.

It catalyses the reaction L-homoserine + NADP(+) = L-aspartate 4-semialdehyde + NADPH + H(+). It carries out the reaction L-homoserine + NAD(+) = L-aspartate 4-semialdehyde + NADH + H(+). The enzyme catalyses L-aspartate + ATP = 4-phospho-L-aspartate + ADP. Its pathway is amino-acid biosynthesis; L-lysine biosynthesis via DAP pathway; (S)-tetrahydrodipicolinate from L-aspartate: step 1/4. It participates in amino-acid biosynthesis; L-methionine biosynthesis via de novo pathway; L-homoserine from L-aspartate: step 1/3. It functions in the pathway amino-acid biosynthesis; L-methionine biosynthesis via de novo pathway; L-homoserine from L-aspartate: step 3/3. The protein operates within amino-acid biosynthesis; L-threonine biosynthesis; L-threonine from L-aspartate: step 1/5. Its pathway is amino-acid biosynthesis; L-threonine biosynthesis; L-threonine from L-aspartate: step 3/5. Its function is as follows. Bifunctional aspartate kinase and homoserine dehydrogenase that catalyzes the first and the third steps toward the synthesis of lysine, methionine and threonine from aspartate. In Haemophilus influenzae (strain ATCC 51907 / DSM 11121 / KW20 / Rd), this protein is Bifunctional aspartokinase/homoserine dehydrogenase (thrA).